A 391-amino-acid chain; its full sequence is UPF0229 protein BCG9842_B4751 (391 aa).

Over residues Met1–Trp16 the composition is skewed to polar residues. Disordered stretches follow at residues Met1–Glu31 and His80–Ala117. Positions Lys21–Glu31 are enriched in basic and acidic residues. The segment covering Gly98–Asp115 has biased composition (gly residues).

This sequence belongs to the UPF0229 family.

The chain is UPF0229 protein BCG9842_B4751 from Bacillus cereus (strain G9842).